Reading from the N-terminus, the 335-residue chain is MSASSQPVLVADIGGTNARFALADTSLDAPLQQDSIREYAVAEFPSLGDAARHHLEQIGATASRGVFAVAGRVDGDEARITNHPWVISRSRTAAMLGFDELHLINDFAAQAMAISLLQSDDVVQVGGAAWVPGKPGQPRNYAVIGPGTGLGVGGLILRHGRCYPLETEGGHVSFPPGTPEEIRILEILSEQFGRVSNERLICGPGLVNIHRAVCEMAGIDPGQLQPVDVTARALHGDPQAMRTVDVFCAVFGAIAGDLVLTQGAWDGVFLTGGLTPKMLDSLQHSGFRQRFEHKGRFSSIMARVPSLAVMHPHAGLLGAAAYAADAERDAPGVAA.

Residue A11–T16 participates in ATP binding.

Belongs to the bacterial glucokinase family.

It localises to the cytoplasm. It catalyses the reaction D-glucose + ATP = D-glucose 6-phosphate + ADP + H(+). The protein is Glucokinase of Stenotrophomonas maltophilia (strain R551-3).